A 413-amino-acid chain; its full sequence is Coiled-coil domain-containing protein 83 (413 aa).

Residues 1-21 (MENSGKANKKDTHDGPPKEIK) are disordered. Over residues 8-21 (NKKDTHDGPPKEIK) the composition is skewed to basic and acidic residues. Coiled coils occupy residues 37 to 184 (EDAV…RKKI) and 216 to 256 (WEND…LSNC).

The sequence is that of Coiled-coil domain-containing protein 83 (CCDC83) from Homo sapiens (Human).